Consider the following 328-residue polypeptide: Sterol-4-alpha-carboxylate 3-dehydrogenase, decarboxylating (328 aa).

Tyr-145 acts as the Proton acceptor in catalysis. Lys-149 contributes to the NAD(+) binding site. Residues 259–279 form a helical membrane-spanning segment; it reads LHMVLPTPIALSLVWIMALIW.

It belongs to the 3-beta-HSD family. As to quaternary structure, homodimer.

It is found in the endoplasmic reticulum membrane. Its subcellular location is the lipid droplet. The enzyme catalyses a 3beta-hydroxysteroid-4alpha-carboxylate + NADP(+) = a 3-oxosteroid + CO2 + NADPH. It catalyses the reaction a 3beta-hydroxysteroid-4alpha-carboxylate + NAD(+) = a 3-oxosteroid + CO2 + NADH. Its pathway is steroid biosynthesis; zymosterol biosynthesis; zymosterol from lanosterol: step 4/6. Functionally, catalyzes the NAD(P)(+)-dependent oxidative decarboxylation of the C4 methyl groups of 4-alpha-carboxysterols in post-squalene cholesterol biosynthesis. This chain is Sterol-4-alpha-carboxylate 3-dehydrogenase, decarboxylating (nsdhl), found in Dictyostelium discoideum (Social amoeba).